A 296-amino-acid chain; its full sequence is Polyamine aminopropyltransferase (296 aa).

In terms of domain architecture, PABS spans 16-251; that stretch reads HLWYFEYYTG…GMWSYTFASK (236 aa). Gln46 serves as a coordination point for S-methyl-5'-thioadenosine. His77 and Asp101 together coordinate spermidine. Residues Glu121 and 152 to 153 contribute to the S-methyl-5'-thioadenosine site; that span reads NG. Catalysis depends on Asp170, which acts as the Proton acceptor. Spermidine is bound at residue 170-173; the sequence is DSTD.

Belongs to the spermidine/spermine synthase family. As to quaternary structure, homotetramer.

The protein localises to the cytoplasm. The enzyme catalyses S-adenosyl 3-(methylsulfanyl)propylamine + putrescine = S-methyl-5'-thioadenosine + spermidine + H(+). Its pathway is amine and polyamine biosynthesis; spermidine biosynthesis; spermidine from putrescine: step 1/1. Strongly inhibited by S-adenosyl-1,8-diamino-3-thiooctane. Its function is as follows. Catalyzes the irreversible transfer of a propylamine group from the amino donor S-adenosylmethioninamine (decarboxy-AdoMet) to putrescine (1,4-diaminobutane) to yield spermidine. It has lower affinity and lower activity towards 1,3-diaminopropane, cadaverine (1,5-diaminopentane), agmatine, norspermidine and spermidine (in vitro). This Thermotoga maritima (strain ATCC 43589 / DSM 3109 / JCM 10099 / NBRC 100826 / MSB8) protein is Polyamine aminopropyltransferase.